The primary structure comprises 71 residues: DNA-directed RNA polymerase subunit omega (71 aa).

The protein belongs to the RNA polymerase subunit omega family. In terms of assembly, the RNAP catalytic core consists of 2 alpha, 1 beta, 1 beta' and 1 omega subunit. When a sigma factor is associated with the core the holoenzyme is formed, which can initiate transcription.

The catalysed reaction is RNA(n) + a ribonucleoside 5'-triphosphate = RNA(n+1) + diphosphate. In terms of biological role, promotes RNA polymerase assembly. Latches the N- and C-terminal regions of the beta' subunit thereby facilitating its interaction with the beta and alpha subunits. In Syntrophomonas wolfei subsp. wolfei (strain DSM 2245B / Goettingen), this protein is DNA-directed RNA polymerase subunit omega.